Reading from the N-terminus, the 56-residue chain is MKTASFILSFVVLLIVIITWIGEVSAVSEPEPVAKATAHAAAVHVPPICSHRECRK.

An N-terminal signal peptide occupies residues 1–26 (MKTASFILSFVVLLIVIITWIGEVSA). Positions 27–42 (VSEPEPVAKATAHAAA) are excised as a propeptide. Cys-49 and Cys-54 form a disulfide bridge.

Post-translationally, probably contains 1 disulfide bond, which may be crucial for activity, since the linear peptide without disulfide bond is inactive. As to expression, expressed by the venom gland.

It localises to the secreted. The chain is Venom peptide 5 from Eumenes pomiformis (Potter wasp).